The chain runs to 815 residues: SNF1 protein kinase subunit beta-1 (815 aa).

Polar residues predominate over residues 1 to 11 (MGNSPSTQDPS). Disordered stretches follow at residues 1-88 (MGNS…TIDK) and 117-148 (SDDHDVGAPEEQVKSPSFLSPGPSMATVKQTK). Gly-2 carries N-myristoyl glycine lipidation. Over residues 12–31 (HSTKKEHGHHFHDAFNKDRQ) the composition is skewed to basic and acidic residues. The segment covering 32 to 42 (GSITSQLFNNR) has biased composition (polar residues). Phosphoserine is present on Ser-33. Basic and acidic residues-rich tracts occupy residues 72-88 (PSTDCDGRMSSDTTIDK) and 117-129 (SDDHDVGAPEEQV). 6 positions are modified to phosphoserine: Ser-181, Ser-198, Ser-200, Ser-206, Ser-209, and Ser-220. Disordered regions lie at residues 310 to 335 (SHANNNGNIENNTRNKGNAGGSNDDF), 363 to 389 (HQNKTKKAQNKKIRSASNSRRSSFASL), and 410 to 444 (PLHPIINDNESQYSAPQHREISHHSNSMSSMSSIS). Positions 313-326 (NNNGNIENNTRNKG) are enriched in low complexity. Ser-331 carries the phosphoserine modification. Residues 363–376 (HQNKTKKAQNKKIR) show a composition bias toward basic residues. 2 stretches are compositionally biased toward low complexity: residues 377–389 (SASNSRRSSFASL) and 433–444 (HSNSMSSMSSIS). A kinase-interacting sequence (KIS); required for interaction with SNF1 region spans residues 473–716 (VSTDIASALK…LQQGGNIDAE (244 aa)). Phosphoserine is present on residues Ser-494 and Ser-497. Positions 583–616 (TLDEELPKRPELKRFPSSSRKSSYYSAKGVERPS) are disordered. A compositionally biased stretch (basic and acidic residues) spans 587-596 (ELPKRPELKR). The segment covering 599 to 608 (SSSRKSSYYS) has biased composition (low complexity). The residue at position 643 (Ser-643) is a Phosphoserine. An association with SNF1 kinase complex (ASC) domain; required for interaction with SNF4 region spans residues 724 to 804 (SRYPVPDLPI…FITQVVYAPC (81 aa)).

It belongs to the 5'-AMP-activated protein kinase beta subunit family. Component of the SNF1 kinase complex, a heterotrimeric complex composed of the catalytic alpha subunit SNF1, one of the three related beta subunits SIP1, SIP2 or GAL83, and the regulatory gamma subunit SNF4. The beta subunit serves as a bridge between the catalytic and the regulatory subunit. Interacts (via KIS domain) with SNF1. Interacts (via ASC domain) with SNF4. In terms of processing, phosphorylated by SNF1 in vitro.

It is found in the cytoplasm. Its subcellular location is the vacuole membrane. In terms of biological role, beta subunit of the SNF1 kinase complex, which is required for transcriptional, metabolic, and developmental adaptations in response to glucose limitation. Has a structural role, mediating heterotrimer formation, and a regulatory role, defining carbon source-regulated subcellular location and substrate specificity of the SNF1 kinase complex. Promotes the PKA-regulated relocalization of the SNF1 kinase complex to the vacuolar membrane in response to various types of carbon stress. This Saccharomyces cerevisiae (strain YJM789) (Baker's yeast) protein is SNF1 protein kinase subunit beta-1 (SIP1).